The following is a 494-amino-acid chain: 3-octaprenyl-4-hydroxybenzoate carboxy-lyase (494 aa).

Asparagine 172 lines the Mn(2+) pocket. Residues 175–177 (IYR), 189–191 (RWL), and 194–195 (RG) each bind prenylated FMN. Glutamate 238 contributes to the Mn(2+) binding site. Catalysis depends on aspartate 294, which acts as the Proton donor.

This sequence belongs to the UbiD family. Homohexamer. The cofactor is prenylated FMN. Mn(2+) is required as a cofactor.

Its subcellular location is the cell membrane. It carries out the reaction a 4-hydroxy-3-(all-trans-polyprenyl)benzoate + H(+) = a 2-(all-trans-polyprenyl)phenol + CO2. The protein operates within cofactor biosynthesis; ubiquinone biosynthesis. Functionally, catalyzes the decarboxylation of 3-octaprenyl-4-hydroxy benzoate to 2-octaprenylphenol, an intermediate step in ubiquinone biosynthesis. The polypeptide is 3-octaprenyl-4-hydroxybenzoate carboxy-lyase (Janthinobacterium sp. (strain Marseille) (Minibacterium massiliensis)).